A 318-amino-acid chain; its full sequence is NADH-ubiquinone oxidoreductase chain 1 (318 aa).

Transmembrane regions (helical) follow at residues 2-22 (FLVNLLLMIIPILLAVAFLTL), 70-90 (MFIMAPILALSLALTMWTPLP), 100-120 (LGVLFILAMSSLAVYSILWSG), 140-160 (ISYEVTLAIILLSVLLMSGSF), 172-192 (LWLIIPAWPLAMMWFISTLAE), 217-237 (GGSFALFFLAEYANIIMMNAI), 253-273 (EFYTTSFMIKTLLMTITFLWI), and 294-314 (LPLTLALCMWHVSIPILTASI).

It belongs to the complex I subunit 1 family. In terms of assembly, core subunit of respiratory chain NADH dehydrogenase (Complex I) which is composed of 45 different subunits.

It localises to the mitochondrion inner membrane. It carries out the reaction a ubiquinone + NADH + 5 H(+)(in) = a ubiquinol + NAD(+) + 4 H(+)(out). Functionally, core subunit of the mitochondrial membrane respiratory chain NADH dehydrogenase (Complex I) which catalyzes electron transfer from NADH through the respiratory chain, using ubiquinone as an electron acceptor. Essential for the catalytic activity and assembly of complex I. The sequence is that of NADH-ubiquinone oxidoreductase chain 1 (MT-ND1) from Emballonura alecto (Philippine sheath-tailed bat).